Consider the following 360-residue polypeptide: Ribosomal RNA large subunit methyltransferase M (360 aa).

S-adenosyl-L-methionine-binding positions include S187, 220 to 223, D239, D259, and D276; that span reads CPGG. Catalysis depends on K305, which acts as the Proton acceptor.

The protein belongs to the class I-like SAM-binding methyltransferase superfamily. RNA methyltransferase RlmE family. RlmM subfamily. Monomer.

Its subcellular location is the cytoplasm. It carries out the reaction cytidine(2498) in 23S rRNA + S-adenosyl-L-methionine = 2'-O-methylcytidine(2498) in 23S rRNA + S-adenosyl-L-homocysteine + H(+). In terms of biological role, catalyzes the 2'-O-methylation at nucleotide C2498 in 23S rRNA. The sequence is that of Ribosomal RNA large subunit methyltransferase M from Shewanella halifaxensis (strain HAW-EB4).